A 703-amino-acid chain; its full sequence is Phosphoribosylformylglycinamidine synthase subunit PurL (703 aa).

H36 is a catalytic residue. Residues Y39 and K80 each coordinate ATP. A Mg(2+)-binding site is contributed by E82. Substrate-binding positions include 83–86 (SHNH) and R105. The active-site Proton acceptor is the H84. Position 106 (D106) interacts with Mg(2+). Q226 lines the substrate pocket. D252 provides a ligand contact to Mg(2+). 294–296 (ETQ) provides a ligand contact to substrate. Residues D468 and G505 each contribute to the ATP site. S508 contributes to the substrate binding site.

It belongs to the FGAMS family. Monomer. Part of the FGAM synthase complex composed of 1 PurL, 1 PurQ and 2 PurS subunits.

The protein localises to the cytoplasm. It catalyses the reaction N(2)-formyl-N(1)-(5-phospho-beta-D-ribosyl)glycinamide + L-glutamine + ATP + H2O = 2-formamido-N(1)-(5-O-phospho-beta-D-ribosyl)acetamidine + L-glutamate + ADP + phosphate + H(+). It participates in purine metabolism; IMP biosynthesis via de novo pathway; 5-amino-1-(5-phospho-D-ribosyl)imidazole from N(2)-formyl-N(1)-(5-phospho-D-ribosyl)glycinamide: step 1/2. Part of the phosphoribosylformylglycinamidine synthase complex involved in the purines biosynthetic pathway. Catalyzes the ATP-dependent conversion of formylglycinamide ribonucleotide (FGAR) and glutamine to yield formylglycinamidine ribonucleotide (FGAM) and glutamate. The FGAM synthase complex is composed of three subunits. PurQ produces an ammonia molecule by converting glutamine to glutamate. PurL transfers the ammonia molecule to FGAR to form FGAM in an ATP-dependent manner. PurS interacts with PurQ and PurL and is thought to assist in the transfer of the ammonia molecule from PurQ to PurL. The sequence is that of Phosphoribosylformylglycinamidine synthase subunit PurL from Sulfurisphaera tokodaii (strain DSM 16993 / JCM 10545 / NBRC 100140 / 7) (Sulfolobus tokodaii).